The primary structure comprises 372 residues: Glutamate 5-kinase (372 aa).

An ATP-binding site is contributed by Lys-14. Substrate-binding residues include Ser-54, Asp-141, and Asn-153. 173-174 (TD) contributes to the ATP binding site. Residues 280 to 358 (RGRVVIDAGA…SEIESVLGHL (79 aa)) enclose the PUA domain.

Belongs to the glutamate 5-kinase family.

The protein resides in the cytoplasm. It catalyses the reaction L-glutamate + ATP = L-glutamyl 5-phosphate + ADP. It functions in the pathway amino-acid biosynthesis; L-proline biosynthesis; L-glutamate 5-semialdehyde from L-glutamate: step 1/2. Functionally, catalyzes the transfer of a phosphate group to glutamate to form L-glutamate 5-phosphate. This is Glutamate 5-kinase from Cupriavidus pinatubonensis (strain JMP 134 / LMG 1197) (Cupriavidus necator (strain JMP 134)).